The chain runs to 466 residues: Glutamate--tRNA ligase 1 (466 aa).

The short motif at 10–20 (PSPTGLIHLGN) is the 'HIGH' region element. 4 residues coordinate Zn(2+): Cys-103, Cys-105, Cys-130, and His-132. Positions 247–251 (PLSKR) match the 'KMSKS' region motif. Lys-250 serves as a coordination point for ATP.

Belongs to the class-I aminoacyl-tRNA synthetase family. Glutamate--tRNA ligase type 1 subfamily. Monomer. The cofactor is Zn(2+).

It localises to the cytoplasm. The enzyme catalyses tRNA(Glu) + L-glutamate + ATP = L-glutamyl-tRNA(Glu) + AMP + diphosphate. Functionally, catalyzes the attachment of glutamate to tRNA(Glu) in a two-step reaction: glutamate is first activated by ATP to form Glu-AMP and then transferred to the acceptor end of tRNA(Glu). This is Glutamate--tRNA ligase 1 from Methylococcus capsulatus (strain ATCC 33009 / NCIMB 11132 / Bath).